The primary structure comprises 562 residues: Formate--tetrahydrofolate ligase (562 aa).

71–78 (TPAGEGKS) provides a ligand contact to ATP.

It belongs to the formate--tetrahydrofolate ligase family.

It catalyses the reaction (6S)-5,6,7,8-tetrahydrofolate + formate + ATP = (6R)-10-formyltetrahydrofolate + ADP + phosphate. It participates in one-carbon metabolism; tetrahydrofolate interconversion. This is Formate--tetrahydrofolate ligase from Bacillus cereus (strain G9842).